A 108-amino-acid chain; its full sequence is Ig kappa chain V-V region EPC 109 (108 aa).

The interval 1-23 (DVQMIQSPSSLSASLGDIVTMTC) is framework-1. An intrachain disulfide couples C23 to C88. The segment at 24-34 (QASQGTNINLN) is complementarity-determining-1. The segment at 35–49 (WFQQKPGKAPKLLIY) is framework-2. The segment at 50-56 (GASILEA) is complementarity-determining-2. A framework-3 region spans residues 57 to 88 (GVPSRFSGRRYGTDFTLTISSLEDEDMATYFC). Residues 89-97 (LQHSYLPYT) form a complementarity-determining-3 region. The framework-4 stretch occupies residues 98–108 (FGGGTKLEKKR).

This is Ig kappa chain V-V region EPC 109 from Mus musculus (Mouse).